The sequence spans 578 residues: 2-succinyl-5-enolpyruvyl-6-hydroxy-3-cyclohexene-1-carboxylate synthase (578 aa).

Residues 186 to 208 (LPAAGGEHHPAEPRSTPWDGPVP) form a disordered region.

This sequence belongs to the TPP enzyme family. MenD subfamily. Homodimer. It depends on Mg(2+) as a cofactor. Mn(2+) serves as cofactor. The cofactor is thiamine diphosphate.

The catalysed reaction is isochorismate + 2-oxoglutarate + H(+) = 5-enolpyruvoyl-6-hydroxy-2-succinyl-cyclohex-3-ene-1-carboxylate + CO2. Its pathway is quinol/quinone metabolism; 1,4-dihydroxy-2-naphthoate biosynthesis; 1,4-dihydroxy-2-naphthoate from chorismate: step 2/7. It participates in cofactor biosynthesis; phylloquinone biosynthesis. Functionally, catalyzes the thiamine diphosphate-dependent decarboxylation of 2-oxoglutarate and the subsequent addition of the resulting succinic semialdehyde-thiamine pyrophosphate anion to isochorismate to yield 2-succinyl-5-enolpyruvyl-6-hydroxy-3-cyclohexene-1-carboxylate (SEPHCHC). This chain is 2-succinyl-5-enolpyruvyl-6-hydroxy-3-cyclohexene-1-carboxylate synthase, found in Synechococcus sp. (strain WH7803).